We begin with the raw amino-acid sequence, 79 residues long: D-alanyl carrier protein (79 aa).

The Carrier domain maps to Met-1 to Cys-77. Residue Ser-35 is modified to O-(pantetheine 4'-phosphoryl)serine.

The protein belongs to the DltC family. 4'-phosphopantetheine is transferred from CoA to a specific serine of apo-DCP.

It is found in the cytoplasm. Its pathway is cell wall biogenesis; lipoteichoic acid biosynthesis. In terms of biological role, carrier protein involved in the D-alanylation of lipoteichoic acid (LTA). The loading of thioester-linked D-alanine onto DltC is catalyzed by D-alanine--D-alanyl carrier protein ligase DltA. The DltC-carried D-alanyl group is further transferred to cell membrane phosphatidylglycerol (PG) by forming an ester bond, probably catalyzed by DltD. D-alanylation of LTA plays an important role in modulating the properties of the cell wall in Gram-positive bacteria, influencing the net charge of the cell wall. In Streptococcus agalactiae serotype Ia (strain ATCC 27591 / A909 / CDC SS700), this protein is D-alanyl carrier protein.